Consider the following 368-residue polypeptide: tRNA 2-selenouridine synthase (368 aa).

The region spanning 15-138 (FLNQHPIMDV…LRQYLIGVIE (124 aa)) is the Rhodanese domain. Cys-98 acts as the S-selanylcysteine intermediate in catalysis.

It belongs to the SelU family. In terms of assembly, monomer.

It catalyses the reaction 5-methylaminomethyl-2-thiouridine(34) in tRNA + selenophosphate + (2E)-geranyl diphosphate + H2O + H(+) = 5-methylaminomethyl-2-selenouridine(34) in tRNA + (2E)-thiogeraniol + phosphate + diphosphate. The enzyme catalyses 5-methylaminomethyl-2-thiouridine(34) in tRNA + (2E)-geranyl diphosphate = 5-methylaminomethyl-S-(2E)-geranyl-thiouridine(34) in tRNA + diphosphate. The catalysed reaction is 5-methylaminomethyl-S-(2E)-geranyl-thiouridine(34) in tRNA + selenophosphate + H(+) = 5-methylaminomethyl-2-(Se-phospho)selenouridine(34) in tRNA + (2E)-thiogeraniol. It carries out the reaction 5-methylaminomethyl-2-(Se-phospho)selenouridine(34) in tRNA + H2O = 5-methylaminomethyl-2-selenouridine(34) in tRNA + phosphate. Functionally, involved in the post-transcriptional modification of the uridine at the wobble position (U34) of tRNA(Lys), tRNA(Glu) and tRNA(Gln). Catalyzes the conversion of 2-thiouridine (S2U-RNA) to 2-selenouridine (Se2U-RNA). Acts in a two-step process involving geranylation of 2-thiouridine (S2U) to S-geranyl-2-thiouridine (geS2U) and subsequent selenation of the latter derivative to 2-selenouridine (Se2U) in the tRNA chain. The chain is tRNA 2-selenouridine synthase from Shewanella baltica (strain OS223).